We begin with the raw amino-acid sequence, 406 residues long: Cysteine desulfurase (406 aa).

An N6-(pyridoxal phosphate)lysine modification is found at lysine 226. The active-site Cysteine persulfide intermediate is the cysteine 364.

Belongs to the class-V pyridoxal-phosphate-dependent aminotransferase family. Csd subfamily. In terms of assembly, homodimer. Interacts with SufE and the SufBCD complex composed of SufB, SufC and SufD. The interaction with SufE is required to mediate the direct transfer of the sulfur atom from the S-sulfanylcysteine. Pyridoxal 5'-phosphate is required as a cofactor.

It is found in the cytoplasm. The catalysed reaction is (sulfur carrier)-H + L-cysteine = (sulfur carrier)-SH + L-alanine. It catalyses the reaction L-selenocysteine + AH2 = hydrogenselenide + L-alanine + A + H(+). The protein operates within cofactor biosynthesis; iron-sulfur cluster biosynthesis. Its function is as follows. Cysteine desulfurases mobilize the sulfur from L-cysteine to yield L-alanine, an essential step in sulfur metabolism for biosynthesis of a variety of sulfur-containing biomolecules. Component of the suf operon, which is activated and required under specific conditions such as oxidative stress and iron limitation. Acts as a potent selenocysteine lyase in vitro, that mobilizes selenium from L-selenocysteine. Selenocysteine lyase activity is however unsure in vivo. This chain is Cysteine desulfurase, found in Salmonella choleraesuis (strain SC-B67).